Consider the following 1397-residue polypeptide: DNA-directed RNA polymerase subunit beta' (1397 aa).

The Zn(2+) site is built by C75, C77, C90, and C93. The Mg(2+) site is built by D465, D467, and D469. Zn(2+) is bound by residues C819, C893, C900, and C903.

Belongs to the RNA polymerase beta' chain family. The RNAP catalytic core consists of 2 alpha, 1 beta, 1 beta' and 1 omega subunit. When a sigma factor is associated with the core the holoenzyme is formed, which can initiate transcription. It depends on Mg(2+) as a cofactor. Zn(2+) is required as a cofactor.

The enzyme catalyses RNA(n) + a ribonucleoside 5'-triphosphate = RNA(n+1) + diphosphate. Its function is as follows. DNA-dependent RNA polymerase catalyzes the transcription of DNA into RNA using the four ribonucleoside triphosphates as substrates. This is DNA-directed RNA polymerase subunit beta' from Acinetobacter baylyi (strain ATCC 33305 / BD413 / ADP1).